The following is a 265-amino-acid chain: Probable aquaporin TIP3-2 (265 aa).

The next 2 helical transmembrane spans lie at 32–52 and 62–82; these read LSEF…VYGL and LGGL…AVAV. Positions 92–94 match the NPA 1 motif; it reads NPA. The next 3 helical transmembrane spans lie at 110 to 130, 151 to 171, and 179 to 199; these read AALY…LLRL, ALLL…ATAV, and DIAP…GGPF. The short motif at 205–207 is the NPA 2 element; it reads NPA. The helical transmembrane segment at 223–243 threads the bilayer; that stretch reads WVYWLGPLIGAGMAGALYEFV.

This sequence belongs to the MIP/aquaporin (TC 1.A.8) family. TIP (TC 1.A.8.10) subfamily. As to expression, expressed in leaves and at lower levels in roots.

The protein localises to the vacuole membrane. Aquaporins facilitate the transport of water and small neutral solutes across cell membranes. May be involved in transport from the vacuolar compartment to the cytoplasm. The polypeptide is Probable aquaporin TIP3-2 (TIP3-2) (Oryza sativa subsp. japonica (Rice)).